Consider the following 89-residue polypeptide: Small ribosomal subunit protein uS15 (89 aa).

It belongs to the universal ribosomal protein uS15 family. Part of the 30S ribosomal subunit. Forms a bridge to the 50S subunit in the 70S ribosome, contacting the 23S rRNA.

One of the primary rRNA binding proteins, it binds directly to 16S rRNA where it helps nucleate assembly of the platform of the 30S subunit by binding and bridging several RNA helices of the 16S rRNA. Functionally, forms an intersubunit bridge (bridge B4) with the 23S rRNA of the 50S subunit in the ribosome. The chain is Small ribosomal subunit protein uS15 from Bartonella bacilliformis (strain ATCC 35685 / KC583 / Herrer 020/F12,63).